A 510-amino-acid chain; its full sequence is 2,3-bisphosphoglycerate-independent phosphoglycerate mutase (510 aa).

Positions 12 and 62 each coordinate Mn(2+). Residue Ser-62 is the Phosphoserine intermediate of the active site. Substrate contacts are provided by residues His-123, 153 to 154 (RD), Arg-185, Arg-191, 261 to 264 (RPDR), and Lys-336. The Mn(2+) site is built by Asp-403, His-407, Asp-444, His-445, and His-462.

This sequence belongs to the BPG-independent phosphoglycerate mutase family. As to quaternary structure, monomer. Requires Mn(2+) as cofactor.

It catalyses the reaction (2R)-2-phosphoglycerate = (2R)-3-phosphoglycerate. The protein operates within carbohydrate degradation; glycolysis; pyruvate from D-glyceraldehyde 3-phosphate: step 3/5. Its function is as follows. Essential for rapid growth and for sporulation. Catalyzes the interconversion of 2-phosphoglycerate and 3-phosphoglycerate. This is 2,3-bisphosphoglycerate-independent phosphoglycerate mutase from Priestia megaterium (strain DSM 319 / IMG 1521) (Bacillus megaterium).